A 144-amino-acid polypeptide reads, in one-letter code: Large ribosomal subunit protein uL15 (144 aa).

Residues 1–56 form a disordered region; that stretch reads MELNNLKPAEGAKHAKRRVGRGIGSGLGKTAGRGHKGQKSRSGGFHKVGFEGGQMP. The segment covering 21 to 31 has biased composition (gly residues); that stretch reads RGIGSGLGKTA.

The protein belongs to the universal ribosomal protein uL15 family. As to quaternary structure, part of the 50S ribosomal subunit.

Functionally, binds to the 23S rRNA. The sequence is that of Large ribosomal subunit protein uL15 from Burkholderia mallei (strain NCTC 10247).